A 295-amino-acid polypeptide reads, in one-letter code: Methionine aminopeptidase (295 aa).

Position 62 (H62) interacts with substrate. Positions 82, 93, and 153 each coordinate a divalent metal cation. H161 provides a ligand contact to substrate. Residues E187 and E280 each contribute to the a divalent metal cation site.

This sequence belongs to the peptidase M24A family. Methionine aminopeptidase archaeal type 2 subfamily. Monomer. Requires Co(2+) as cofactor. It depends on Zn(2+) as a cofactor. The cofactor is Mn(2+). Fe(2+) is required as a cofactor.

It carries out the reaction Release of N-terminal amino acids, preferentially methionine, from peptides and arylamides.. Its function is as follows. Removes the N-terminal methionine from nascent proteins. The N-terminal methionine is often cleaved when the second residue in the primary sequence is small and uncharged (Met-Ala-, Cys, Gly, Pro, Ser, Thr, or Val). The polypeptide is Methionine aminopeptidase (Pyrococcus horikoshii (strain ATCC 700860 / DSM 12428 / JCM 9974 / NBRC 100139 / OT-3)).